The chain runs to 92 residues: MHGTRPSLADITLILEEIPEIIDLHCDEQFDSSEEENNHQLTEPAVQAYGVVTTCCKCGRAVRLVVECGPEDIRDLEQLFLKTLNLVCPHCA.

Positions 1–43 (MHGTRPSLADITLILEEIPEIIDLHCDEQFDSSEEENNHQLTE) are E7 terminal domain. Positions 24 to 28 (LHCDE) match the LXCXE motif; interaction with host RB1 and TMEM173/STING motif. A zinc finger lies at 55-91 (CCKCGRAVRLVVECGPEDIRDLEQLFLKTLNLVCPHC). The Nuclear export signal signature appears at 73–81 (IRDLEQLFL).

This sequence belongs to the papillomaviridae E7 protein family. Homodimer. Homooligomer. Interacts with host RB1; this interaction induces dissociation of RB1-E2F1 complex thereby disrupting RB1 activity. Interacts with host EP300; this interaction represses EP300 transcriptional activity. Interacts with protein E2; this interaction inhibits E7 oncogenic activity. Interacts with host TMEM173/STING; this interaction impairs the ability of TMEM173/STING to sense cytosolic DNA and promote the production of type I interferon (IFN-alpha and IFN-beta). Highly phosphorylated.

The protein resides in the host cytoplasm. It localises to the host nucleus. In terms of biological role, plays a role in viral genome replication by driving entry of quiescent cells into the cell cycle. Stimulation of progression from G1 to S phase allows the virus to efficiently use the cellular DNA replicating machinery to achieve viral genome replication. E7 protein has both transforming and trans-activating activities. Induces the disassembly of the E2F1 transcription factor from RB1, with subsequent transcriptional activation of E2F1-regulated S-phase genes. Interferes with host histone deacetylation mediated by HDAC1 and HDAC2, leading to transcription activation. Also plays a role in the inhibition of both antiviral and antiproliferative functions of host interferon alpha. Interaction with host TMEM173/STING impairs the ability of TMEM173/STING to sense cytosolic DNA and promote the production of type I interferon (IFN-alpha and IFN-beta). This chain is Protein E7, found in Homo sapiens (Human).